The primary structure comprises 288 residues: Inositol monophosphatase 2 (288 aa).

4 residues coordinate Mg(2+): E81, D101, I103, and D104. A substrate-binding site is contributed by E81. Residues 103-106 (IDGT), 205-207 (GSS), Q224, and D231 contribute to the substrate site. D231 serves as a coordination point for Mg(2+).

It belongs to the inositol monophosphatase superfamily. In terms of assembly, homodimer. It depends on Mg(2+) as a cofactor.

It is found in the cytoplasm. It carries out the reaction a myo-inositol phosphate + H2O = myo-inositol + phosphate. It catalyses the reaction 1D-myo-inositol 1-phosphate + H2O = myo-inositol + phosphate. The enzyme catalyses 1D-myo-inositol 2-phosphate + H2O = myo-inositol + phosphate. The catalysed reaction is 1D-myo-inositol 3-phosphate + H2O = myo-inositol + phosphate. It carries out the reaction 1D-myo-inositol 4-phosphate + H2O = myo-inositol + phosphate. It catalyses the reaction 1D-myo-inositol 5-phosphate + H2O = myo-inositol + phosphate. The enzyme catalyses 1D-myo-inositol 6-phosphate + H2O = myo-inositol + phosphate. The catalysed reaction is alpha-D-glucose 1-phosphate + H2O = D-glucose + phosphate. It carries out the reaction glycerol 2-phosphate + H2O = glycerol + phosphate. It catalyses the reaction adenosine 2'-phosphate + H2O = adenosine + phosphate. Its pathway is polyol metabolism; myo-inositol biosynthesis; myo-inositol from D-glucose 6-phosphate: step 2/2. Its activity is regulated as follows. Inhibited by high Li(+) and restricted Mg(2+) concentrations. In terms of biological role, phosphatase that can use myo-inositol monophosphates, myo-inositol 1,4-diphosphate, scyllo-inositol-1,4-diphosphate, glucose-1-phosphate, beta-glycerophosphate and 2'-AMP as substrates in vitro. It is likely that IMPA2 has an as yet unidentified in vivo substrate(s). Has been implicated as the pharmacological target for lithium (Li(+)) action in brain. The protein is Inositol monophosphatase 2 of Homo sapiens (Human).